The primary structure comprises 241 residues: Putative CRISPR-associated endoribonuclease-like protein Cas6 (241 aa).

Belongs to the CRISPR-associated protein Cas6/Cse3/CasE family. As to quaternary structure, binds crRNA.

Its function is as follows. CRISPR (clustered regularly interspaced short palindromic repeat), is an adaptive immune system that provides protection against mobile genetic elements (viruses, transposable elements and conjugative plasmids). CRISPR clusters contain sequences complementary to antecedent mobile elements and target invading nucleic acids. CRISPR clusters are transcribed and processed into CRISPR RNA (crRNA), also called psiRNA (prokaryotic silencing) in this organism (Potential). The chain is Putative CRISPR-associated endoribonuclease-like protein Cas6 (cas6b) from Pyrococcus furiosus (strain ATCC 43587 / DSM 3638 / JCM 8422 / Vc1).